The chain runs to 339 residues: Ketol-acid reductoisomerase (NADP(+)) (339 aa).

Residues 1 to 182 enclose the KARI N-terminal Rossmann domain; sequence MRVYYDRDAD…GGGRAGIIET (182 aa). Residues 24-27, arginine 48, serine 51, threonine 53, and 83-86 contribute to the NADP(+) site; these read YGSQ and DELQ. Residue histidine 108 is part of the active site. Glycine 134 is a binding site for NADP(+). In terms of domain architecture, KARI C-terminal knotted spans 183–328; sequence TFKEECETDL…AELRAMMPWI (146 aa). Mg(2+)-binding residues include aspartate 191, glutamate 195, glutamate 227, and glutamate 231. Serine 252 provides a ligand contact to substrate.

Belongs to the ketol-acid reductoisomerase family. Mg(2+) serves as cofactor.

The catalysed reaction is (2R)-2,3-dihydroxy-3-methylbutanoate + NADP(+) = (2S)-2-acetolactate + NADPH + H(+). The enzyme catalyses (2R,3R)-2,3-dihydroxy-3-methylpentanoate + NADP(+) = (S)-2-ethyl-2-hydroxy-3-oxobutanoate + NADPH + H(+). Its pathway is amino-acid biosynthesis; L-isoleucine biosynthesis; L-isoleucine from 2-oxobutanoate: step 2/4. It participates in amino-acid biosynthesis; L-valine biosynthesis; L-valine from pyruvate: step 2/4. Functionally, involved in the biosynthesis of branched-chain amino acids (BCAA). Catalyzes an alkyl-migration followed by a ketol-acid reduction of (S)-2-acetolactate (S2AL) to yield (R)-2,3-dihydroxy-isovalerate. In the isomerase reaction, S2AL is rearranged via a Mg-dependent methyl migration to produce 3-hydroxy-3-methyl-2-ketobutyrate (HMKB). In the reductase reaction, this 2-ketoacid undergoes a metal-dependent reduction by NADPH to yield (R)-2,3-dihydroxy-isovalerate. This chain is Ketol-acid reductoisomerase (NADP(+)), found in Beijerinckia indica subsp. indica (strain ATCC 9039 / DSM 1715 / NCIMB 8712).